Consider the following 180-residue polypeptide: NADH-quinone oxidoreductase subunit I (180 aa).

4Fe-4S ferredoxin-type domains are found at residues 50–80 (LTRDPDGEERCVACNLCAVACPVGCISLQKA) and 90–119 (EFFRINFSRCIFCGLCEEACPTTAIQLTPD). [4Fe-4S] cluster-binding residues include Cys60, Cys63, Cys66, Cys70, Cys99, Cys102, Cys105, and Cys109.

It belongs to the complex I 23 kDa subunit family. NDH-1 is composed of 13 different subunits. Subunits NuoA, H, J, K, L, M, N constitute the membrane sector of the complex. The cofactor is [4Fe-4S] cluster.

The protein localises to the cell inner membrane. The enzyme catalyses a quinone + NADH + 5 H(+)(in) = a quinol + NAD(+) + 4 H(+)(out). NDH-1 shuttles electrons from NADH, via FMN and iron-sulfur (Fe-S) centers, to quinones in the respiratory chain. The immediate electron acceptor for the enzyme in this species is believed to be ubiquinone. Couples the redox reaction to proton translocation (for every two electrons transferred, four hydrogen ions are translocated across the cytoplasmic membrane), and thus conserves the redox energy in a proton gradient. This is NADH-quinone oxidoreductase subunit I from Yersinia enterocolitica serotype O:8 / biotype 1B (strain NCTC 13174 / 8081).